The primary structure comprises 168 residues: Photosystem I assembly protein Ycf3 (168 aa).

3 TPR repeats span residues A35–P68, S72–L105, and G120–N153.

This sequence belongs to the Ycf3 family.

It localises to the plastid. Its subcellular location is the chloroplast thylakoid membrane. Essential for the assembly of the photosystem I (PSI) complex. May act as a chaperone-like factor to guide the assembly of the PSI subunits. In Phaseolus vulgaris (Kidney bean), this protein is Photosystem I assembly protein Ycf3.